A 402-amino-acid polypeptide reads, in one-letter code: tRNA(Met) cytidine acetate ligase (402 aa).

Residues 7–20 (ITEYNPFHLGHELH), glycine 102, asparagine 171, and arginine 196 contribute to the ATP site.

It belongs to the TmcAL family.

It localises to the cytoplasm. It carries out the reaction cytidine(34) in elongator tRNA(Met) + acetate + ATP = N(4)-acetylcytidine(34) in elongator tRNA(Met) + AMP + diphosphate. In terms of biological role, catalyzes the formation of N(4)-acetylcytidine (ac(4)C) at the wobble position of elongator tRNA(Met), using acetate and ATP as substrates. First activates an acetate ion to form acetyladenylate (Ac-AMP) and then transfers the acetyl group to tRNA to form ac(4)C34. The protein is tRNA(Met) cytidine acetate ligase of Clostridium perfringens (strain ATCC 13124 / DSM 756 / JCM 1290 / NCIMB 6125 / NCTC 8237 / Type A).